The sequence spans 491 residues: Ketol-acid reductoisomerase (NADP(+)) (491 aa).

The region spanning 15-208 is the KARI N-terminal Rossmann domain; that stretch reads AQLGKCRFMG…GGHRAGVLES (194 aa). NADP(+)-binding positions include 45–48, arginine 68, arginine 76, serine 78, and 108–110; these read CGAQ and DKQ. Histidine 132 is a catalytic residue. Glycine 158 lines the NADP(+) pocket. 2 KARI C-terminal knotted domains span residues 209 to 344 and 345 to 484; these read SFVA…TAPQ and FEGK…MTDM. The Mg(2+) site is built by aspartate 217, glutamate 221, glutamate 389, and glutamate 393. Serine 414 contacts substrate.

This sequence belongs to the ketol-acid reductoisomerase family. It depends on Mg(2+) as a cofactor.

It carries out the reaction (2R)-2,3-dihydroxy-3-methylbutanoate + NADP(+) = (2S)-2-acetolactate + NADPH + H(+). The catalysed reaction is (2R,3R)-2,3-dihydroxy-3-methylpentanoate + NADP(+) = (S)-2-ethyl-2-hydroxy-3-oxobutanoate + NADPH + H(+). It participates in amino-acid biosynthesis; L-isoleucine biosynthesis; L-isoleucine from 2-oxobutanoate: step 2/4. It functions in the pathway amino-acid biosynthesis; L-valine biosynthesis; L-valine from pyruvate: step 2/4. Involved in the biosynthesis of branched-chain amino acids (BCAA). Catalyzes an alkyl-migration followed by a ketol-acid reduction of (S)-2-acetolactate (S2AL) to yield (R)-2,3-dihydroxy-isovalerate. In the isomerase reaction, S2AL is rearranged via a Mg-dependent methyl migration to produce 3-hydroxy-3-methyl-2-ketobutyrate (HMKB). In the reductase reaction, this 2-ketoacid undergoes a metal-dependent reduction by NADPH to yield (R)-2,3-dihydroxy-isovalerate. The sequence is that of Ketol-acid reductoisomerase (NADP(+)) from Salmonella dublin (strain CT_02021853).